Here is an 82-residue protein sequence, read N- to C-terminus: Small ribosomal subunit protein uS17c (82 aa).

Belongs to the universal ribosomal protein uS17 family. In terms of assembly, part of the 30S ribosomal subunit.

It is found in the plastid. The protein resides in the chloroplast. In terms of biological role, one of the primary rRNA binding proteins, it binds specifically to the 5'-end of 16S ribosomal RNA. The polypeptide is Small ribosomal subunit protein uS17c (rps17) (Cyanidioschyzon merolae (strain NIES-3377 / 10D) (Unicellular red alga)).